We begin with the raw amino-acid sequence, 238 residues long: MAEPVYHRVVVKLSGEYFAGDQSFGIHQPTIDRIAGDLIAAQQLGVEIAVVIGGGNIFRGVEVSTRGVSRPTGDTMGMLATVMNCLALEAAIERRGVSARTLSAFVMPQVCELFTRATAHRYLAEKRIVLLGGGTGNPFFTTDTTAVLRAAEIGAQAVLKATNVDGVYSADPKKDPSAQRFERLTHSQALDGGYKVMDATAFALARDTLLPIIVFSIAEPGSVGAILSGTGRGTIVAG.

Lys-12 to Gly-15 contributes to the ATP binding site. Residue Gly-54 coordinates UMP. ATP-binding residues include Gly-55 and Arg-59. Residues Asp-74 and Thr-135–Thr-142 contribute to the UMP site. ATP contacts are provided by Thr-162, Asn-163, Tyr-168, and Asp-171.

Belongs to the UMP kinase family. In terms of assembly, homohexamer.

The protein resides in the cytoplasm. It carries out the reaction UMP + ATP = UDP + ADP. It participates in pyrimidine metabolism; CTP biosynthesis via de novo pathway; UDP from UMP (UMPK route): step 1/1. Inhibited by UTP. Functionally, catalyzes the reversible phosphorylation of UMP to UDP. The sequence is that of Uridylate kinase from Rhodopseudomonas palustris (strain BisA53).